Reading from the N-terminus, the 861-residue chain is MAEILLTSVINKSVEIAGNLLIQEGKRLYWLKEDIDWLQREMRHIRSYVDNAKAKEAGGDSRVKNLLKDIQELAGDVEDLLDDFLPKIQQSNKFNYCLKRSSFADEFAMEIEKIKRRVVDIDRIRKTYNIIDTDNNNDDCVLLDRRRLFLHADETEIIGLDDDFNMLQAKLLNQDLHYGVVSIVGMPGLGKTTLAKKLYRLIRDQFECSGLVYVSQQPRASEILLDIAKQIGLTEQKMKENLEDNLRSLLKIKRYVFLLDDVWDVEIWDDLKLVLPECDSKVGSRIIITSRNSNVGRYIGGESSLHALQPLESEKSFELFTKKIFNFDDNNSWANASPDLVNIGRNIVGRCGGIPLAIVVTAGMLRARERTEHAWNRVLESMGHKVQDGCAKVLALSYNDLPIASRPCFLYFGLYPEDHEIRAFDLINMWIAEKFIVVNSGNRREAEDLAEDVLNDLVSRNLIQLAKRTYNGRISSCRIHDLLHSLCVDLAKESNFFHTAHDAFGDPGNVARLRRITFYSDNVMIEFFRSNPKLEKLRVLFCFAKDPSIFSHMAYFDFKLLHTLVVVMSQSFQAYVTIPSKFGNMTCLRYLRLEGNICGKLPNSIVKLTRLETIDIDRRSLIQPPSGVWESKHLRHLCYRDYGQACNSCFSISSFYPNIYSLHPNNLQTLMWIPDKFFEPRLLHRLINLRKLGILGVSNSTVKMLSIFSPVLKALEVLKLSFSSDPSEQIKLSSYPHIAKLHLNVNRTMALNSQSFPPNLIKLTLANFTVDRYILAVLKTFPKLRKLKMFICKYNEEKMALSGEANGYSFPQLEVLHIHSPNGLSEVTCTDDVSMPKLKKLLLTGFHCGISLSERLKKLSK.

Positions 63–83 (VKNLLKDIQELAGDVEDLLDD) form a coiled coil. The region spanning 162–388 (DDFNMLQAKL…LESMGHKVQD (227 aa)) is the NB-ARC domain. An ATP-binding site is contributed by 185 to 192 (GMPGLGKT). 13 LRR repeats span residues 225–248 (LDIAKQIGLTEQKMKENLEDNLRS), 305–327 (LHALQPLESEKSFELFTKKIFNF), 388–411 (DGCAKVLALSYNDLPIASRPCFLY), 449–472 (LAEDVLNDLVSRNLIQLAKRTYNG), 510–536 (VARLRRITFYSDNVMIEFFRSNPKLEK), 585–608 (MTCLRYLRLEGNICGKLPNSIVKL), 609–631 (TRLETIDIDRRSLIQPPSGVWES), 652–680 (ISSFYPNIYSLHPNNLQTLMWIPDKFFEP), 689–710 (LRKLGILGVSNSTVKMLSIFSP), 712–735 (LKALEVLKLSFSSDPSEQIKLSSY), 736–758 (PHIAKLHLNVNRTMALNSQSFPP), 784–807 (LRKLKMFICKYNEEKMALSGEANG), and 810–835 (FPQLEVLHIHSPNGLSEVTCTDDVSM).

It belongs to the disease resistance NB-LRR family. As to quaternary structure, (Microbial infection) Interacts with tobamoviruses mouvement protein at the plasma membrane; this interaction triggers defense responses leading to programmed cell death. In terms of assembly, binds to HSP90 proteins; this interaction seems required for defense responses toward tobamoviruses.

The protein resides in the cell membrane. Its function is as follows. Inhibitor of viral mouvements which confers resistance to some tobamoviruses including tomato mosaic virus (ToMV) (e.g. isolate L and W3) and tobacco mosaic virus (TMV), but not to resistance-breaking isolates (e.g. Ltbl) ToMV and tomato brown rugose fruit virus (ToBRFV). Elicits a hypersensitive reaction in response to avirulent (Avr) movement proteins from resistance inducing tobamoviruses (e.g. ToMV and TMV) strains, thus leading to programmed cell death. The sequence is that of ToMV resistant protein Tm-2 netted virescent from Solanum lycopersicum (Tomato).